Reading from the N-terminus, the 104-residue chain is Large ribosomal subunit protein uL24 (104 aa).

It belongs to the universal ribosomal protein uL24 family. As to quaternary structure, part of the 50S ribosomal subunit.

Its function is as follows. One of two assembly initiator proteins, it binds directly to the 5'-end of the 23S rRNA, where it nucleates assembly of the 50S subunit. Functionally, one of the proteins that surrounds the polypeptide exit tunnel on the outside of the subunit. The sequence is that of Large ribosomal subunit protein uL24 from Rhodopseudomonas palustris (strain BisB5).